Consider the following 530-residue polypeptide: TNF receptor-associated factor 6 (530 aa).

An interaction with TAX1BP1 region spans residues 1 to 362 (MSLLNCENSC…EAQQCNGIYI (362 aa)). The RING-type; degenerate zinc finger occupies 70–109 (CPICLMALREAVQTPCGHRFCKACITKSIRDAGHKCPVDN). K124 is covalently cross-linked (Glycyl lysine isopeptide (Lys-Gly) (interchain with G-Cter in SUMO); alternate). K124 is covalently cross-linked (Glycyl lysine isopeptide (Lys-Gly) (interchain with G-Cter in ubiquitin); alternate). Residue K142 forms a Glycyl lysine isopeptide (Lys-Gly) (interchain with G-Cter in SUMO) linkage. 2 consecutive TRAF-type zinc fingers follow at residues 150-202 (DHQV…EEKE) and 203-259 (IHDQ…NHLA). Residues 302-356 (NYEETVKQLEGRLVRQDHQIRELTAKMETQSMHVSELKRTIRSLEDKVAEMEAQQ) adopt a coiled-coil conformation. A Glycyl lysine isopeptide (Lys-Gly) (interchain with G-Cter in ubiquitin) cross-link involves residue K327. Positions 358-507 (NGIYIWKIGN…DDTLLVRCEV (150 aa)) constitute an MATH domain. An interaction with TANK region spans residues 363-530 (WKIGNFGMHL…FQPRSTDAGV (168 aa)). Residue K461 forms a Glycyl lysine isopeptide (Lys-Gly) (interchain with G-Cter in SUMO) linkage.

This sequence belongs to the TNF receptor-associated factor family. A subfamily. As to quaternary structure, homotrimer. Homooligomer. N-terminal region is dimeric while C-terminal region is trimeric; maybe providing a mode of oligomerization. Upon IL1B treatment, forms a complex with PELI1, IRAK1, IRAK4 and MYD88; this complex recruits MAP3K7/TAK1, TAB1 and TAB2 to mediate NF-kappa-B activation. Direct binding of SMAD6 to PELI1 prevents the complex formation and hence negatively regulates IL1R-TLR signaling and eventually NF-kappa-B-mediated gene expression. Binds to TNFRSF5/CD40 and TNFRSF11A/RANK. Associates with NGFR, TNFRSF17, IRAK2, IRAK3, RIPK2, MAP3K1, MAP3K5, MAP3K14, CSK, TRAF, TRAF-interacting protein TRIP and TNF receptor associated protein TDP2. Interacts with IL17R. Interacts with SQSTM1 bridging NTRK1 and NGFR. Forms a ternary complex with SQSTM1 and PRKCZ. Interacts with PELI2 and PELI3. Binds UBE2V1. Interacts with TAX1BP1; this interaction mediates deubiquitination of TRAF6 and inhibition of NF-kappa-B activation. Interacts with ZNF675. Interacts with ARRB1 and ARRB2. Interacts with MAP3K7 and TAB1/MAP3K7IP1; during IL-1 signaling. Interacts with UBE2N. Interacts with TGFBR1, HDAC1 and RANGAP1. Interacts with AKT1, AKT2 and AKT3. Interacts (via TRAF domains) with NUMBL (via C-terminal). Interacts with RBCK1. Interacts with LIMD1 (via LIM domains). Interacts with RSAD2/viperin. Interacts (via C-terminus) with EIF2AK2/PKR (via the kinase catalytic domain). Interacts with ZFAND5. Interacts with IL1RL1. Interacts with TRAFD1. Interacts with AJUBA. Interacts with MAVS/IPS1. Interacts (via TRAF domains) with DYNC2I2 (via WD domains). Interacts with IFIT3 (via N-terminus). Interacts with TICAM2. Interacts with CARD14. Interacts with CD40 and MAP3K8; the interaction is required for ERK activation. Interacts with TICAM1 and this interaction is enhanced in the presence of WDFY1. Interacts with TANK; this interaction increases in response to DNA damage. Interacts with USP10; this interaction increases in response to DNA damage. Interacts with ZC3H12A; this interaction increases in response to DNA damage and is stimulated by TANK. Interacts with WDFY3. Interacts with TRIM13. Interacts with GPS2. Interacts (via C-terminus) with SASH1. Interacts with LRRC19. Interacts with IL17RA and TRAF3IP2. Interacts with TOMM70. Interacts with AMBRA1; interaction is required to mediate 'Lys-63'-linked ubiquitination of ULK1. Interacts with CRBN; this interaction inhibits TLR4-mediated signaling by preventing TRAF6-mediated ubiquitination of ECSIT. In terms of processing, sumoylated on Lys-124, Lys-142 and Lys-461 with SUMO1. Post-translationally, polyubiquitinated on Lys-124 by TRAF3IP2; after cell stimulation with IL17A. Polyubiquitinated; after cell stimulation with IL1B or TGFB. This ligand-induced cell stimulation leads to dimerization/oligomerization of TRAF6 molecules, followed by auto-ubiquitination which involves UBE2N and UBE2V1 and leads to TRAF6 activation. This 'Lys-63' site-specific poly-ubiquitination appears to be associated with the activation of signaling molecules. Endogenous autoubiquitination occurs only for the cytoplasmic form. Deubiquitinated by USP10 in a TANK-dependent manner, leading to the negative regulation of NF-kappa-B signaling upon DNA damage. LRRC19 induces 'Lys-63' ubiquitination. Ubiquitinated at Lys-327 by the SCF(FBXL2) complex, leading to its degradation by the proteasome.

It localises to the cytoplasm. Its subcellular location is the cell cortex. The protein localises to the nucleus. It is found in the lipid droplet. The catalysed reaction is S-ubiquitinyl-[E2 ubiquitin-conjugating enzyme]-L-cysteine + [acceptor protein]-L-lysine = [E2 ubiquitin-conjugating enzyme]-L-cysteine + N(6)-ubiquitinyl-[acceptor protein]-L-lysine.. The protein operates within protein modification; protein ubiquitination. Its function is as follows. E3 ubiquitin ligase that, together with UBE2N and UBE2V1, mediates the synthesis of 'Lys-63'-linked-polyubiquitin chains conjugated to proteins, such as ECSIT, IKBKG, IRAK1, AKT1 and AKT2. Also mediates ubiquitination of free/unanchored polyubiquitin chain that leads to MAP3K7 activation. Leads to the activation of NF-kappa-B and JUN. Seems to also play a role in dendritic cells (DCs) maturation and/or activation. Represses c-Myb-mediated transactivation, in B-lymphocytes. Adapter protein that seems to play a role in signal transduction initiated via TNF receptor, IL-1 receptor and IL-17 receptor. Regulates osteoclast differentiation by mediating the activation of adapter protein complex 1 (AP-1) and NF-kappa-B, in response to RANK-L stimulation. Together with MAP3K8, mediates CD40 signals that activate ERK in B-cells and macrophages, and thus may play a role in the regulation of immunoglobulin production. Acts as a regulator of the JNK and NF-kappa-B signaling pathways by initiating assembly of heterotypic 'Lys-63'-/'Lys-48'-linked branched ubiquitin chains that are then recognized by TAB2: TRAF6 catalyzes initial 'Lys-63'-linked-polyubiquitin chains that are then branched via 'Lys-48'-linked polyubiquitin by HUWE1. 'Lys-63'-/'Lys-48'-linked branched ubiquitin chains protect 'Lys-63'-linkages from CYLD deubiquitination. Also participates in the TCR signaling by ubiquitinating LAT. The sequence is that of TNF receptor-associated factor 6 (Traf6) from Rattus norvegicus (Rat).